The following is a 338-amino-acid chain: RNA 3'-terminal phosphate cyclase (338 aa).

ATP contacts are provided by residues Gln103 and Tyr283 to Gln287. Residue His308 is the Tele-AMP-histidine intermediate of the active site.

This sequence belongs to the RNA 3'-terminal cyclase family. Type 1 subfamily.

Its subcellular location is the cytoplasm. The catalysed reaction is a 3'-end 3'-phospho-ribonucleotide-RNA + ATP = a 3'-end 2',3'-cyclophospho-ribonucleotide-RNA + AMP + diphosphate. Functionally, catalyzes the conversion of 3'-phosphate to a 2',3'-cyclic phosphodiester at the end of RNA. The mechanism of action of the enzyme occurs in 3 steps: (A) adenylation of the enzyme by ATP; (B) transfer of adenylate to an RNA-N3'P to produce RNA-N3'PP5'A; (C) and attack of the adjacent 2'-hydroxyl on the 3'-phosphorus in the diester linkage to produce the cyclic end product. The biological role of this enzyme is unknown but it is likely to function in some aspects of cellular RNA processing. The sequence is that of RNA 3'-terminal phosphate cyclase from Escherichia coli O17:K52:H18 (strain UMN026 / ExPEC).